The following is a 298-amino-acid chain: ATP phosphoribosyltransferase (298 aa).

This sequence belongs to the ATP phosphoribosyltransferase family. Long subfamily. Mg(2+) serves as cofactor.

The protein localises to the cytoplasm. The enzyme catalyses 1-(5-phospho-beta-D-ribosyl)-ATP + diphosphate = 5-phospho-alpha-D-ribose 1-diphosphate + ATP. It functions in the pathway amino-acid biosynthesis; L-histidine biosynthesis; L-histidine from 5-phospho-alpha-D-ribose 1-diphosphate: step 1/9. Feedback inhibited by histidine. Its function is as follows. Catalyzes the condensation of ATP and 5-phosphoribose 1-diphosphate to form N'-(5'-phosphoribosyl)-ATP (PR-ATP). Has a crucial role in the pathway because the rate of histidine biosynthesis seems to be controlled primarily by regulation of HisG enzymatic activity. The protein is ATP phosphoribosyltransferase of Aliivibrio salmonicida (strain LFI1238) (Vibrio salmonicida (strain LFI1238)).